The sequence spans 490 residues: Ketol-acid reductoisomerase (NADP(+)) (490 aa).

The KARI N-terminal Rossmann domain maps to 16–207; the sequence is INKCRFMKKE…GGHRAGVLES (192 aa). Residues 44–47, Lys-67, Ser-77, and 107–109 contribute to the NADP(+) site; these read CGAQ and DKQ. The active site involves His-131. NADP(+) is bound at residue Gly-157. KARI C-terminal knotted domains lie at 208-343 and 344-483; these read SFIA…TAPV and YNEK…MKKM. The Mg(2+) site is built by Asp-216, Glu-220, Glu-388, and Glu-392. Ser-413 provides a ligand contact to substrate.

It belongs to the ketol-acid reductoisomerase family. The cofactor is Mg(2+).

The enzyme catalyses (2R)-2,3-dihydroxy-3-methylbutanoate + NADP(+) = (2S)-2-acetolactate + NADPH + H(+). It carries out the reaction (2R,3R)-2,3-dihydroxy-3-methylpentanoate + NADP(+) = (S)-2-ethyl-2-hydroxy-3-oxobutanoate + NADPH + H(+). It participates in amino-acid biosynthesis; L-isoleucine biosynthesis; L-isoleucine from 2-oxobutanoate: step 2/4. The protein operates within amino-acid biosynthesis; L-valine biosynthesis; L-valine from pyruvate: step 2/4. Functionally, involved in the biosynthesis of branched-chain amino acids (BCAA). Catalyzes an alkyl-migration followed by a ketol-acid reduction of (S)-2-acetolactate (S2AL) to yield (R)-2,3-dihydroxy-isovalerate. In the isomerase reaction, S2AL is rearranged via a Mg-dependent methyl migration to produce 3-hydroxy-3-methyl-2-ketobutyrate (HMKB). In the reductase reaction, this 2-ketoacid undergoes a metal-dependent reduction by NADPH to yield (R)-2,3-dihydroxy-isovalerate. The protein is Ketol-acid reductoisomerase (NADP(+)) of Buchnera aphidicola subsp. Acyrthosiphon pisum (strain 5A).